A 316-amino-acid polypeptide reads, in one-letter code: tRNA pseudouridine synthase B (316 aa).

Asp-47 (nucleophile) is an active-site residue.

It belongs to the pseudouridine synthase TruB family. Type 1 subfamily.

The catalysed reaction is uridine(55) in tRNA = pseudouridine(55) in tRNA. Functionally, responsible for synthesis of pseudouridine from uracil-55 in the psi GC loop of transfer RNAs. The chain is tRNA pseudouridine synthase B from Photobacterium profundum (strain SS9).